The primary structure comprises 162 residues: Putative 4-hydroxy-4-methyl-2-oxoglutarate aldolase (162 aa).

Residues 75-78 (GDML) and Arg-97 contribute to the substrate site. Asp-98 is an a divalent metal cation binding site.

This sequence belongs to the class II aldolase/RraA-like family. As to quaternary structure, homotrimer. A divalent metal cation serves as cofactor.

It catalyses the reaction 4-hydroxy-4-methyl-2-oxoglutarate = 2 pyruvate. The enzyme catalyses oxaloacetate + H(+) = pyruvate + CO2. Catalyzes the aldol cleavage of 4-hydroxy-4-methyl-2-oxoglutarate (HMG) into 2 molecules of pyruvate. Also contains a secondary oxaloacetate (OAA) decarboxylase activity due to the common pyruvate enolate transition state formed following C-C bond cleavage in the retro-aldol and decarboxylation reactions. This Azotobacter vinelandii (strain DJ / ATCC BAA-1303) protein is Putative 4-hydroxy-4-methyl-2-oxoglutarate aldolase.